Reading from the N-terminus, the 333-residue chain is Ribosome biogenesis regulatory protein homolog (333 aa).

2 disordered regions span residues 227 to 248 (KANVKTGKKRKFEANEAPVSGE) and 271 to 333 (AAAV…ARKG). Positions 278-295 (LREKKEKSERKGAKDQTR) are enriched in basic and acidic residues. The span at 324–333 (GANKAKARKG) shows a compositional bias: basic residues.

The protein belongs to the RRS1 family.

The protein localises to the nucleus. It localises to the nucleolus. Functionally, involved in ribosomal large subunit assembly. This is Ribosome biogenesis regulatory protein homolog from Caenorhabditis elegans.